The following is a 107-amino-acid chain: Prostate collagen triple helix protein (107 aa).

The disordered stretch occupies residues 47–107 (PLIPRTPGSP…PTSPLFPFCP (61 aa)). Over residues 81–100 (VGPKGPMLPLGPSGPVGPTS) the composition is skewed to low complexity.

In terms of tissue distribution, expressed in prostate and testis. Weakly or not expressed in other tissues. Overexpressed in prostate cancers.

The protein localises to the cytoplasm. Its function is as follows. May be involved in growth and survival of prostate cancer cells through the TAF-Ibeta pathway. The chain is Prostate collagen triple helix protein (PCOTH) from Homo sapiens (Human).